Consider the following 280-residue polypeptide: Four and a half LIM domains protein 3 (280 aa).

The residue at position 2 (Ser2) is an N-acetylserine. A C4-type zinc finger spans residues 7 to 31; the sequence is CAKCSESLYGRKYIQTDDGPYCVPC. LIM zinc-binding domains follow at residues 40–92 and 101–153; these read CAEC…CNDC and CSAC…CVPC. An N6-acetyllysine modification is found at Lys157. 2 LIM zinc-binding domains span residues 162–212 and 221–275; these read CARC…CVTC and CSSC…CQGC. Lys235 carries the post-translational modification N6-acetyllysine.

Interacts with SOX15; the interaction recruits FHL3 to FOXK1 promoters where it acts as a transcriptional coactivator of FOXK1.

It is found in the nucleus. Its subcellular location is the cytoplasm. In terms of biological role, recruited by SOX15 to FOXK1 promoters where it acts as a transcriptional coactivator of FOXK1. In Bos taurus (Bovine), this protein is Four and a half LIM domains protein 3 (FHL3).